Reading from the N-terminus, the 96-residue chain is Small ribosomal subunit protein bS6 (96 aa).

Belongs to the bacterial ribosomal protein bS6 family.

Binds together with bS18 to 16S ribosomal RNA. This chain is Small ribosomal subunit protein bS6, found in Synechococcus sp. (strain JA-2-3B'a(2-13)) (Cyanobacteria bacterium Yellowstone B-Prime).